Reading from the N-terminus, the 432-residue chain is Mannan endo-1,4-beta-mannosidase 1 (432 aa).

An N-terminal signal peptide occupies residues 1–28 (MRLLGAHRAALLVLACVVVVVIHGLGEA). 2 residues coordinate substrate: tryptophan 93 and asparagine 209. The Proton donor role is filled by glutamate 210. Position 289 (tyrosine 289) interacts with substrate. The active-site Nucleophile is the glutamate 329. Position 371 (tryptophan 371) interacts with substrate.

The protein belongs to the glycosyl hydrolase 5 (cellulase A) family. Ubiquitous.

It is found in the secreted. The enzyme catalyses Random hydrolysis of (1-&gt;4)-beta-D-mannosidic linkages in mannans, galactomannans and glucomannans.. The sequence is that of Mannan endo-1,4-beta-mannosidase 1 (MAN1) from Oryza sativa subsp. japonica (Rice).